The primary structure comprises 345 residues: N-acetyl-gamma-glutamyl-phosphate reductase (345 aa).

C149 is an active-site residue.

The protein belongs to the NAGSA dehydrogenase family. Type 1 subfamily.

It is found in the cytoplasm. The catalysed reaction is N-acetyl-L-glutamate 5-semialdehyde + phosphate + NADP(+) = N-acetyl-L-glutamyl 5-phosphate + NADPH + H(+). It participates in amino-acid biosynthesis; L-arginine biosynthesis; N(2)-acetyl-L-ornithine from L-glutamate: step 3/4. In terms of biological role, catalyzes the NADPH-dependent reduction of N-acetyl-5-glutamyl phosphate to yield N-acetyl-L-glutamate 5-semialdehyde. This Bacillus anthracis protein is N-acetyl-gamma-glutamyl-phosphate reductase.